The chain runs to 852 residues: Probable nitrite reductase-hydroxylamine oxidoreductase fusion protein (852 aa).

The first 27 residues, 1-27 (MLNKSAALVPVVLAFLFLFLCFQCLYA), serve as a signal peptide directing secretion. Residues 28–327 (DIRCLTGKDG…DEGRKTLSAP (300 aa)) are nitrite reductase domain. 2 consecutive Plastocyanin-like domains span residues 72 to 169 (VPGP…IVEP) and 217 to 307 (GETW…VEEG). Residues histidine 102 and histidine 145 each contribute to the Cu cation site. A hydroxylamine oxidoreductase domain region spans residues 328–827 (GQDRQPPTLE…ISWWWGTAQG (500 aa)). Residues cysteine 406, cysteine 409, histidine 410, histidine 426, cysteine 463, cysteine 466, histidine 467, histidine 471, cysteine 483, cysteine 486, histidine 487, histidine 505, histidine 537, cysteine 543, cysteine 546, histidine 547, histidine 550, cysteine 563, cysteine 566, histidine 567, cysteine 614, cysteine 617, histidine 618, cysteine 686, cysteine 689, histidine 690, and histidine 813 each coordinate heme.

The protein in the N-terminal section; belongs to the multicopper oxidase family. Cu cation is required as a cofactor. It depends on heme as a cofactor.

It is found in the encapsulin nanocompartment. The catalysed reaction is hydroxylamine + 4 Fe(III)-[cytochrome c] + H2O = 4 Fe(II)-[cytochrome c] + nitrite + 5 H(+). It catalyses the reaction nitric oxide + Fe(III)-[cytochrome c] + H2O = Fe(II)-[cytochrome c] + nitrite + 2 H(+). A nitrite reductase-hydroxylamine oxidoreductase protein that probably functions in the type 1 encapsulin nanocompartment. Probably involved in reductive catalysis. Targeted to the encapsulin nanocompartment by association with the diheme domain of the encapsulin shell protein (AC Q1Q6L7). Catalyzes the reduction of nitrite to nitric oxide (NO). Catalyzes the oxidation of hydroxylamine to nitrite. The sequence is that of Probable nitrite reductase-hydroxylamine oxidoreductase fusion protein from Kuenenia stuttgartiensis.